The sequence spans 319 residues: Thiamine pyrophosphokinase (319 aa).

N-acetylserine is present on S2.

This sequence belongs to the thiamine pyrophosphokinase family. As to quaternary structure, homodimer.

It carries out the reaction thiamine + ATP = thiamine diphosphate + AMP + H(+). It participates in cofactor biosynthesis; thiamine diphosphate biosynthesis; thiamine diphosphate from thiamine: step 1/1. Its function is as follows. Essential protein, it is the only enzyme in yeast capable of synthesizing thiamine pyrophosphate (TPP). This Saccharomyces cerevisiae (strain ATCC 204508 / S288c) (Baker's yeast) protein is Thiamine pyrophosphokinase.